The chain runs to 422 residues: L-threonine dehydratase biosynthetic IlvA (422 aa).

Residue Lys56 is modified to N6-(pyridoxal phosphate)lysine. Pyridoxal 5'-phosphate-binding positions include Asn83, 189–193 (GGGGL), and Ser315. The 75-residue stretch at 339 to 413 (HYFILNFPQR…FDPSNIYINE (75 aa)) folds into the ACT-like domain.

It belongs to the serine/threonine dehydratase family. In terms of assembly, homotetramer. Requires pyridoxal 5'-phosphate as cofactor.

It catalyses the reaction L-threonine = 2-oxobutanoate + NH4(+). It participates in amino-acid biosynthesis; L-isoleucine biosynthesis; 2-oxobutanoate from L-threonine: step 1/1. Catalyzes the anaerobic formation of alpha-ketobutyrate and ammonia from threonine in a two-step reaction. The first step involved a dehydration of threonine and a production of enamine intermediates (aminocrotonate), which tautomerizes to its imine form (iminobutyrate). Both intermediates are unstable and short-lived. The second step is the nonenzymatic hydrolysis of the enamine/imine intermediates to form 2-ketobutyrate and free ammonia. In the low water environment of the cell, the second step is accelerated by RidA. This is L-threonine dehydratase biosynthetic IlvA (ilvA) from Staphylococcus aureus (strain Mu50 / ATCC 700699).